We begin with the raw amino-acid sequence, 123 residues long: Small ribosomal subunit protein uS12 (123 aa).

D89 is subject to 3-methylthioaspartic acid.

Belongs to the universal ribosomal protein uS12 family. As to quaternary structure, part of the 30S ribosomal subunit. Contacts proteins S8 and S17. May interact with IF1 in the 30S initiation complex.

Its function is as follows. With S4 and S5 plays an important role in translational accuracy. In terms of biological role, interacts with and stabilizes bases of the 16S rRNA that are involved in tRNA selection in the A site and with the mRNA backbone. Located at the interface of the 30S and 50S subunits, it traverses the body of the 30S subunit contacting proteins on the other side and probably holding the rRNA structure together. The combined cluster of proteins S8, S12 and S17 appears to hold together the shoulder and platform of the 30S subunit. This is Small ribosomal subunit protein uS12 from Geobacter metallireducens (strain ATCC 53774 / DSM 7210 / GS-15).